A 132-amino-acid polypeptide reads, in one-letter code: Small ribosomal subunit protein uS8 (132 aa).

The protein belongs to the universal ribosomal protein uS8 family. Part of the 30S ribosomal subunit. Contacts proteins S5 and S12.

Its function is as follows. One of the primary rRNA binding proteins, it binds directly to 16S rRNA central domain where it helps coordinate assembly of the platform of the 30S subunit. In Christiangramia forsetii (strain DSM 17595 / CGMCC 1.15422 / KT0803) (Gramella forsetii), this protein is Small ribosomal subunit protein uS8.